Reading from the N-terminus, the 98-residue chain is Small ribosomal subunit protein bS6 (98 aa).

The protein belongs to the bacterial ribosomal protein bS6 family.

In terms of biological role, binds together with bS18 to 16S ribosomal RNA. The protein is Small ribosomal subunit protein bS6 of Levilactobacillus brevis (strain ATCC 367 / BCRC 12310 / CIP 105137 / JCM 1170 / LMG 11437 / NCIMB 947 / NCTC 947) (Lactobacillus brevis).